A 155-amino-acid polypeptide reads, in one-letter code: SsrA-binding protein (155 aa).

Belongs to the SmpB family.

It is found in the cytoplasm. Its function is as follows. Required for rescue of stalled ribosomes mediated by trans-translation. Binds to transfer-messenger RNA (tmRNA), required for stable association of tmRNA with ribosomes. tmRNA and SmpB together mimic tRNA shape, replacing the anticodon stem-loop with SmpB. tmRNA is encoded by the ssrA gene; the 2 termini fold to resemble tRNA(Ala) and it encodes a 'tag peptide', a short internal open reading frame. During trans-translation Ala-aminoacylated tmRNA acts like a tRNA, entering the A-site of stalled ribosomes, displacing the stalled mRNA. The ribosome then switches to translate the ORF on the tmRNA; the nascent peptide is terminated with the 'tag peptide' encoded by the tmRNA and targeted for degradation. The ribosome is freed to recommence translation, which seems to be the essential function of trans-translation. The chain is SsrA-binding protein from Lactococcus lactis subsp. cremoris (strain MG1363).